Here is a 384-residue protein sequence, read N- to C-terminus: Ceramide synthase 6 (384 aa).

The Lumenal portion of the chain corresponds to 1–34 (MAGILAWFWNERFWLPHNVTWADLKNTEEATFPQ). Asn18 carries an N-linked (GlcNAc...) asparagine glycan. Residues 35–55 (AEDLYLAFPLAFCIFMVRLIF) traverse the membrane as a helical segment. The homeobox-like stretch occupies residues 66–127 (ALNIQANGPQ…RQRRNQEKPS (62 aa)). The 202-residue stretch at 130 to 331 (TRFCESMWRF…IVKIACKTVS (202 aa)) folds into the TLC domain. 4 consecutive transmembrane segments (helical) span residues 174–194 (LTAD…SLMV), 205–225 (FGIM…SYVN), 263–283 (LFVM…PLWV), and 303–323 (VFNL…YLIV). The Cytoplasmic portion of the chain corresponds to 324 to 384 (KIACKTVSKG…LLTGPCSVDD (61 aa)). The tract at residues 335–384 (VSKDDRSDIESSSDDEDSEPPGKKPHSSTTTNGTSGTNGYLLTGPCSVDD) is disordered. Over residues 361–373 (SSTTTNGTSGTNG) the composition is skewed to low complexity.

In terms of processing, N-glycosylated. Glycosylation on Asn-18 is not necessary for function. Post-translationally, acetylated. Deacetylation by SIRT3 increases enzyme activity and promotes mitochondrial ceramide accumulation. Phosphorylated at the C-terminus by CK2. In terms of tissue distribution, broadly expressed, with highest levels in kidney and brain (at protein level).

Its subcellular location is the endoplasmic reticulum membrane. It catalyses the reaction a sphingoid base + hexadecanoyl-CoA = an N-hexadecanoyl-sphingoid base + CoA + H(+). The catalysed reaction is sphinganine + hexadecanoyl-CoA = N-hexadecanoylsphinganine + CoA + H(+). It carries out the reaction hexadecasphinganine + hexadecanoyl-CoA = N-hexadecanoylhexadecasphinganine + CoA + H(+). The enzyme catalyses sphing-4-enine + hexadecanoyl-CoA = N-hexadecanoylsphing-4-enine + CoA + H(+). It catalyses the reaction sphinganine + tetradecanoyl-CoA = N-(tetradecanoyl)-sphinganine + CoA + H(+). The catalysed reaction is sphinganine + octadecanoyl-CoA = N-(octadecanoyl)-sphinganine + CoA + H(+). Its pathway is lipid metabolism; sphingolipid metabolism. Its function is as follows. Ceramide synthase that catalyzes the transfer of the acyl chain from acyl-CoA to a sphingoid base, with high selectivity toward palmitoyl-CoA (hexadecanoyl-CoA; C16:0-CoA). Can use other acyl donors, but with less efficiency. N-acylates sphinganine and sphingosine bases to form dihydroceramides and ceramides in de novo synthesis and salvage pathways, respectively. Ceramides generated by CERS6 play a role in inflammatory response. Acts as a regulator of metabolism and hepatic lipid accumulation. Under high fat diet, palmitoyl- (C16:0-) ceramides generated by CERS6 specifically bind the mitochondrial fission factor MFF, thereby promoting mitochondrial fragmentation and contributing to the development of obesity. This Mus musculus (Mouse) protein is Ceramide synthase 6.